A 370-amino-acid polypeptide reads, in one-letter code: 3 beta-hydroxysteroid dehydrogenase/Delta 5--&gt;4-isomerase (370 aa).

Residue Tyr158 is the Proton acceptor of the active site. Lys162 serves as a coordination point for NAD(+).

This sequence belongs to the 3-beta-HSD family. In terms of assembly, monomer.

The protein localises to the cytoplasm. The enzyme catalyses a 3beta-hydroxy-Delta(5)-steroid + NAD(+) = a 3-oxo-Delta(5)-steroid + NADH + H(+). It catalyses the reaction cholesterol + NAD(+) = cholest-5-en-3-one + NADH + H(+). The catalysed reaction is pregnenolone + NAD(+) = pregn-5-ene-3,20-dione + NADH + H(+). It carries out the reaction 3beta-hydroxyandrost-5-en-17-one + NAD(+) = androst-5-ene-3,17-dione + NADH + H(+). The enzyme catalyses a 3-oxo-Delta(5)-steroid = a 3-oxo-Delta(4)-steroid. It catalyses the reaction cholest-5-en-3-one = cholest-4-en-3-one. The catalysed reaction is pregn-5-ene-3,20-dione = progesterone. It carries out the reaction androst-5-ene-3,17-dione = androst-4-ene-3,17-dione. The protein operates within lipid metabolism; steroid biosynthesis. 3-beta-HSD is a bifunctional enzyme, that catalyzes the oxidation and isomerization of cholesterol, pregnenolone, and dehydroepiandrosterone (DHEA) into cholest-4-en-3-one, progesterone, and androsterone, respectively. This is 3 beta-hydroxysteroid dehydrogenase/Delta 5--&gt;4-isomerase from Mycobacterium tuberculosis (strain CDC 1551 / Oshkosh).